A 457-amino-acid polypeptide reads, in one-letter code: Aromatic amino acid transport protein AroP (457 aa).

The Cytoplasmic portion of the chain corresponds to 1–19 (MMEGQQHGEQLKRGLKNRH). A helical membrane pass occupies residues 20 to 40 (IQLIALGGAIGTGLFLGSASV). The Periplasmic portion of the chain corresponds to 41-42 (IQ). A helical membrane pass occupies residues 43-63 (SAGPGIILGYAIAGFIAFLIM). The Cytoplasmic portion of the chain corresponds to 64 to 86 (RQLGEMVVEEPVAGSFSHFAYKY). The chain crosses the membrane as a helical span at residues 87 to 107 (WGSFAGFASGWNYWVLYVLVA). Over 108 to 117 (MAELTAVGKY) the chain is Periplasmic. The helical transmembrane segment at 118-138 (IQFWYPEIPTWVSAAVFFVVI) threads the bilayer. Residues 139-155 (NAINLTNVKVFGEMEFW) lie on the Cytoplasmic side of the membrane. A helical transmembrane segment spans residues 156–176 (FAIIKVIAVVAMIIFGGWLLF). Residues 177–201 (SGNGGPQASVSNLWDQGGFLPHGFT) are Periplasmic-facing. Residues 202–222 (GLVMMMAIIMFSFGGLELVGI) form a helical membrane-spanning segment. Residues 223 to 240 (TAAEADNPEQSIPKATNQ) lie on the Cytoplasmic side of the membrane. A helical transmembrane segment spans residues 241–261 (VIYRILIFYIGSLAVLLSLMP). Residues 262–271 (WTRVTADTSP) are Periplasmic-facing. The helical transmembrane segment at 272-292 (FVLIFHELGDTFVANALNIVV) threads the bilayer. Over 293–333 (LTAALSVYNSCVYCNSRMLFGLAQQGNAPKALASVDKRGVP) the chain is Cytoplasmic. The helical transmembrane segment at 334–354 (VNTILVSALVTALCVLINYLA) threads the bilayer. The Periplasmic segment spans residues 355–358 (PESA). Residues 359–379 (FGLLMALVVSALVINWAMISL) form a helical membrane-spanning segment. Residues 380–399 (AHMKFRRAKQEQGVVTRFPA) lie on the Cytoplasmic side of the membrane. Residues 400–420 (LLYPLGNWICLLFMAAVLVIM) form a helical membrane-spanning segment. Residues 421–425 (LMTPG) are Periplasmic-facing. A helical membrane pass occupies residues 426 to 446 (MAISVYLIPVWLIVLGIGYLF). At 447–457 (KEKTAKAVKAH) the chain is on the cytoplasmic side.

It belongs to the amino acid-polyamine-organocation (APC) superfamily. Amino acid transporter (AAT) (TC 2.A.3.1) family.

The protein localises to the cell inner membrane. The catalysed reaction is L-phenylalanine(in) + H(+)(in) = L-phenylalanine(out) + H(+)(out). It carries out the reaction L-tryptophan(in) + H(+)(in) = L-tryptophan(out) + H(+)(out). It catalyses the reaction L-tyrosine(in) + H(+)(in) = L-tyrosine(out) + H(+)(out). In terms of biological role, permease that is involved in the active transport across the cytoplasmic membrane of all three aromatic amino acids, phenylalanine, tyrosine and tryptophan. In Shigella flexneri, this protein is Aromatic amino acid transport protein AroP (aroP).